Here is a 38-residue protein sequence, read N- to C-terminus: Large ribosomal subunit protein bL36 (38 aa).

Belongs to the bacterial ribosomal protein bL36 family.

In Wigglesworthia glossinidia brevipalpis, this protein is Large ribosomal subunit protein bL36.